Consider the following 396-residue polypeptide: 4-hydroxy-3-methylbut-2-en-1-yl diphosphate synthase (ferredoxin) (396 aa).

Cysteine 305, cysteine 308, cysteine 339, and glutamate 346 together coordinate [4Fe-4S] cluster.

It belongs to the IspG family. Requires [4Fe-4S] cluster as cofactor.

It catalyses the reaction (2E)-4-hydroxy-3-methylbut-2-enyl diphosphate + 2 oxidized [2Fe-2S]-[ferredoxin] + H2O = 2-C-methyl-D-erythritol 2,4-cyclic diphosphate + 2 reduced [2Fe-2S]-[ferredoxin] + H(+). It participates in isoprenoid biosynthesis; isopentenyl diphosphate biosynthesis via DXP pathway; isopentenyl diphosphate from 1-deoxy-D-xylulose 5-phosphate: step 5/6. Functionally, converts 2C-methyl-D-erythritol 2,4-cyclodiphosphate (ME-2,4cPP) into 1-hydroxy-2-methyl-2-(E)-butenyl 4-diphosphate. This is 4-hydroxy-3-methylbut-2-en-1-yl diphosphate synthase (ferredoxin) from Gloeobacter violaceus (strain ATCC 29082 / PCC 7421).